Reading from the N-terminus, the 1638-residue chain is ATP-dependent helicase brm (1638 aa).

Disordered stretches follow at residues 1 to 137 (MASP…SQEN) and 201 to 387 (QMQQ…GMPM). The span at 7–51 (ANSPMPPPQAPSPMAPPSQSPAPSPHSPYPHQQPGPLQGPPPPGH) shows a compositional bias: pro residues. Residues 52–63 (PGAYGHPMQHGP) show a composition bias toward low complexity. The span at 121–131 (GGPPGGPPPPE) shows a compositional bias: pro residues. The 36-residue stretch at 173 to 208 (HLNGNQVNLLRTQITAYRLLARNKPISMQMQQALQA) folds into the QLQ domain. Positions 201–211 (QMQQALQAAQQ) are enriched in low complexity. Pro residues-rich tracts occupy residues 212–231 (QPPP…PPPG), 238–253 (PPVP…PSAG), 263–272 (ASNPYGPPVP), and 279–304 (APPP…PPPI). Low complexity-rich tracts occupy residues 305-317 (QQQQ…QQQS) and 365-382 (PGSQ…QVPP). Residues 501–573 (QKLEAERKRR…EKERMRRLMA (73 aa)) enclose the HSA domain. Residues 691-730 (DEEDSCGSNDDHKPKVEEQPTATEDATDKAQATGNDEDAK) are disordered. A phosphoserine mark is found at S695 and S698. Basic and acidic residues predominate over residues 699–708 (NDDHKPKVEE). The segment covering 710–724 (PTATEDATDKAQATG) has biased composition (polar residues). Positions 785 to 950 (VSLYNNNLNG…WALLNFLLPS (166 aa)) constitute a Helicase ATP-binding domain. 798–805 (DEMGLGKT) serves as a coordination point for ATP. The DEGH box motif lies at 900–903 (DEGH). The region spanning 1102–1263 (LLDRILPKLK…QKSTGSERQQ (162 aa)) is the Helicase C-terminal domain. Residues 1380–1391 (DGAEFDEEEEED) show a composition bias toward acidic residues. Residues 1380-1412 (DGAEFDEEEEEDDSKRKRRKRKNRKEESDDDSL) are disordered. S1407 and S1411 each carry phosphoserine. The Bromo domain maps to 1425–1530 (RSKKQMHKIM…KVFVGARQRI (106 aa)). Residues 1544–1578 (NTGEAHGNGGSDNSDNDDDDGGDDGSDDEEIATTS) are disordered. Residues 1557–1574 (SDNDDDDGGDDGSDDEEI) are compositionally biased toward acidic residues. Residues S1591 and S1594 each carry the phosphoserine modification. Residues 1592-1604 (LASAPATPTQSSS) are compositionally biased toward low complexity. The interval 1592–1638 (LASAPATPTQSSSNVSSGAATTSKKQTRRKRSQKKYTISDDDDDDMD) is disordered. A compositionally biased stretch (basic residues) spans 1616–1625 (KQTRRKRSQK).

Component of the Brahma complex, which is composed of brm, osa, mor, Snr1/Bap45, dalao/Bap111, Bap55, Bap60 and Act42A/Bap47. Interacts with asf1. Associates with the brm-HDAC3-erm repressor complex, composed of brm, HDAC3 and erm. Interacts with erm and HDAC3.

Its subcellular location is the nucleus. It catalyses the reaction ATP + H2O = ADP + phosphate + H(+). Functionally, transcriptional regulator. Acts as a coactivator, assisting one or more dedicated transcriptional activators of ANTC and BXC homeotic gene clusters. Can counteract the repressive effect of Polycomb protein. ATPase subunit of the Brahma complex, a multiprotein complex which is the equivalent of the yeast SWI/SNF complex and acts by remodeling the chromatin by catalyzing an ATP-dependent alteration in the structure of nucleosomal DNA. This complex can both serve as a transcriptional coactivator or corepressor, depending on the context. In type II neuroblast lineage, as part of the Brm remodeling complex, suppresses the formation of ectopic neuroblasts probably through interaction with erm and HDAC3. The chain is ATP-dependent helicase brm (brm) from Drosophila melanogaster (Fruit fly).